Consider the following 735-residue polypeptide: DNA replication licensing factor mcm5-A (735 aa).

Positions 332–538 (IYETVAKSIA…RDMTLAKHVM (207 aa)) constitute an MCM domain. R372 is a binding site for ADP. The Arginine finger signature appears at 513-516 (SRFD).

The protein belongs to the MCM family. Component of the mcm2-7 complex (RLF-M). The complex forms a toroidal hexameric ring with the proposed subunit order mcm2-mcm6-mcm4-mcm7-mcm3-mcm5. The heterodimer of mmcm3/mcm5 interacts with mcm4, mmcm6, mcm7 and weakly with mcm2. Component of the CMG helicase complex, composed of the mcm2-7 complex, the GINS complex and cdc45.

The protein resides in the nucleus. It is found in the chromosome. It carries out the reaction ATP + H2O = ADP + phosphate + H(+). In terms of biological role, acts as a component of the MCM2-7 complex (MCM complex) which is the replicative helicase essential for 'once per cell cycle' DNA replication initiation and elongation in eukaryotic cells. Core component of CDC45-MCM-GINS (CMG) helicase, the molecular machine that unwinds template DNA during replication, and around which the replisome is built. The active ATPase sites in the MCM2-7 ring are formed through the interaction surfaces of two neighboring subunits such that a critical structure of a conserved arginine finger motif is provided in trans relative to the ATP-binding site of the Walker A box of the adjacent subunit. The six ATPase active sites, however, are likely to contribute differentially to the complex helicase activity. The protein is DNA replication licensing factor mcm5-A (mcm5-a) of Xenopus laevis (African clawed frog).